A 207-amino-acid polypeptide reads, in one-letter code: Large ribosomal subunit protein uL4 (207 aa).

Positions 44-81 (KRQGTQSAKTRSEVRGGGRKPWRQKGTGRARQGSIRSP) are disordered. The span at 60–71 (GGRKPWRQKGTG) shows a compositional bias: basic residues.

Belongs to the universal ribosomal protein uL4 family. Part of the 50S ribosomal subunit.

One of the primary rRNA binding proteins, this protein initially binds near the 5'-end of the 23S rRNA. It is important during the early stages of 50S assembly. It makes multiple contacts with different domains of the 23S rRNA in the assembled 50S subunit and ribosome. In terms of biological role, forms part of the polypeptide exit tunnel. The chain is Large ribosomal subunit protein uL4 from Finegoldia magna (strain ATCC 29328 / DSM 20472 / WAL 2508) (Peptostreptococcus magnus).